The sequence spans 235 residues: Small ribosomal subunit protein uS2 (235 aa).

This sequence belongs to the universal ribosomal protein uS2 family.

This chain is Small ribosomal subunit protein uS2, found in Anoxybacillus flavithermus (strain DSM 21510 / WK1).